Here is a 225-residue protein sequence, read N- to C-terminus: Cytidylate kinase (225 aa).

Residue 11–19 participates in ATP binding; it reads GPAGVGKST.

Belongs to the cytidylate kinase family. Type 1 subfamily.

It is found in the cytoplasm. It catalyses the reaction CMP + ATP = CDP + ADP. It carries out the reaction dCMP + ATP = dCDP + ADP. The chain is Cytidylate kinase from Lawsonia intracellularis (strain PHE/MN1-00).